A 373-amino-acid polypeptide reads, in one-letter code: Superinfection exclusion protein (373 aa).

Positions 1–15 are cleaved as a signal peptide; sequence MIVLLILSLACTAFT.

The protein belongs to the serpin family. Orthopoxvirus OPG040 subfamily. In terms of assembly, interacts with A56 protein.

The protein localises to the virion membrane. Its subcellular location is the host cell membrane. Prevents cell to cell fusion via its interaction with A56 protein. The A56-K2 complex associates with components of the entry fusion complex (EFC) presumably to avoid superinfection and syncytium formation. The protein is Superinfection exclusion protein (OPG040) of Homo sapiens (Human).